Reading from the N-terminus, the 264-residue chain is MKSKLKLHGFNNLTKTLSFNIYDICYAETPEDLQAYVQYIDEEYDAERLTQILTDVVDIIGANILNIARQDYDPQGASVTILISEQPVTPTDSQIEESPGPLPDTILAHLDKSHITVHTYPEIHPVDGIATFRVDIDVSTCGVISPLKALNYLIHQFDSDIVTVDYRVRGFTRDIEGRKHFIDHEINSIQNYLSDDTREAYQMTDVNVYQENLFHTKMLLKDFELENYLFGDATRNLSAEQREQVTERLRHEMLEIFYARNMPH.

S113 (schiff-base intermediate with substrate; via pyruvic acid) is an active-site residue. The residue at position 113 (S113) is a Pyruvic acid (Ser); by autocatalysis. The active-site Proton acceptor; for processing activity is the H118. C141 serves as the catalytic Proton donor; for catalytic activity.

This sequence belongs to the prokaryotic AdoMetDC family. Type 2 subfamily. In terms of assembly, heterooctamer of four alpha and four beta chains arranged as a tetramer of alpha/beta heterodimers. Pyruvate serves as cofactor. Is synthesized initially as an inactive proenzyme. Formation of the active enzyme involves a self-maturation process in which the active site pyruvoyl group is generated from an internal serine residue via an autocatalytic post-translational modification. Two non-identical subunits are generated from the proenzyme in this reaction, and the pyruvate is formed at the N-terminus of the alpha chain, which is derived from the carboxyl end of the proenzyme. The post-translation cleavage follows an unusual pathway, termed non-hydrolytic serinolysis, in which the side chain hydroxyl group of the serine supplies its oxygen atom to form the C-terminus of the beta chain, while the remainder of the serine residue undergoes an oxidative deamination to produce ammonia and the pyruvoyl group blocking the N-terminus of the alpha chain.

The catalysed reaction is S-adenosyl-L-methionine + H(+) = S-adenosyl 3-(methylsulfanyl)propylamine + CO2. It functions in the pathway amine and polyamine biosynthesis; S-adenosylmethioninamine biosynthesis; S-adenosylmethioninamine from S-adenosyl-L-methionine: step 1/1. Catalyzes the decarboxylation of S-adenosylmethionine to S-adenosylmethioninamine (dcAdoMet), the propylamine donor required for the synthesis of the polyamines spermine and spermidine from the diamine putrescine. This Pseudomonas paraeruginosa (strain DSM 24068 / PA7) (Pseudomonas aeruginosa (strain PA7)) protein is S-adenosylmethionine decarboxylase proenzyme.